Consider the following 580-residue polypeptide: MDDTYNKLPDEIWLEIINFSNEKNLLFTNKSFFELFDFMKVEEDIIECIIKYNLLHILAYIISLGGPESFIIKKNIITTESLNRHFKMSCEKGQYTIVTYLVALGADFRIDNDYGLIHAAKNGHIGVVKYLVSKGVNIGANDNCAIKFASENGHLEVVEYLVSKGADINANNNYPIEMASKNGHLKVVEYLVSLGVDIRANDDYVVGLAYYYDHHEVVDYLVSQGAVLNKSKYSSSYNAFILLPVEIWIKIVNHTQEIGLLLTNRSFFELLSLINIKVDIIEYISNNNLTDVLKYLVFLKSINHPFCRFIRYSSLDDYLVKSCCEGDLSIIKDLILLGASERKAVMLACQNGHLEIIRYFVSQGFNIKCGSNCAVTIASENGHIEVVRYLISLGADINSGNNYAIKYASENGHLEVVKYLVDQGANIRANNDRAVRFASRKGHLEVVKYLVSKGANIRAKDDRAVTLASQNGHLEVVKYLVSQGTDIKAGDDYAVRWASRNGHLEVVKYLISQGANIKADDDYAVRWASLNGHLEVVKFLVNQNADIRAINNYAVRWAHKNKHFDVVEYLISQGAVINPT.

14 ANK repeats span residues 81–110 (SLNRHFKMSCEKGQYTIVTYLVALGADFRI), 111–140 (DNDYGLIHAAKNGHIGVVKYLVSKGVNIGA), 141–170 (NDNCAIKFASENGHLEVVEYLVSKGADINA), 172–200 (NNYPIEMASKNGHLKVVEYLVSLGVDIRA), 202–230 (DDYVVGLAYYYDHHEVVDYLVSQGAVLNK), 314–339 (SLDDYLVKSCCEGDLSIIKDLILLGA), 340–369 (SERKAVMLACQNGHLEIIRYFVSQGFNIKC), 370–399 (GSNCAVTIASENGHIEVVRYLISLGADINS), 400–429 (GNNYAIKYASENGHLEVVKYLVDQGANIRA), 431–459 (NDRAVRFASRKGHLEVVKYLVSKGANIRA), 461–489 (DDRAVTLASQNGHLEVVKYLVSQGTDIKA), 490–519 (GDDYAVRWASRNGHLEVVKYLISQGANIKA), 521–549 (DDYAVRWASLNGHLEVVKFLVNQNADIRA), and 551–579 (NNYAVRWAHKNKHFDVVEYLISQGAVINP).

The protein is Putative ankyrin repeat protein L63 of Acanthamoeba polyphaga (Amoeba).